Consider the following 278-residue polypeptide: Large ribosomal subunit protein uL2 (278 aa).

Disordered regions lie at residues Ser-27–Gly-57 and Val-224–Arg-278. The span at Arg-258 to Arg-278 shows a compositional bias: basic residues.

Belongs to the universal ribosomal protein uL2 family. In terms of assembly, part of the 50S ribosomal subunit. Forms a bridge to the 30S subunit in the 70S ribosome.

In terms of biological role, one of the primary rRNA binding proteins. Required for association of the 30S and 50S subunits to form the 70S ribosome, for tRNA binding and peptide bond formation. It has been suggested to have peptidyltransferase activity; this is somewhat controversial. Makes several contacts with the 16S rRNA in the 70S ribosome. The polypeptide is Large ribosomal subunit protein uL2 (Streptomyces avermitilis (strain ATCC 31267 / DSM 46492 / JCM 5070 / NBRC 14893 / NCIMB 12804 / NRRL 8165 / MA-4680)).